Consider the following 462-residue polypeptide: uncharacterized protein (462 aa).

The interval 405 to 462 (QPIGNNKSSPMKREFTAMEEDKTETGDIFKLLSQQKPAKGAKSKSKKYKKTEEDLSAV) is disordered. The span at 415–431 (MKREFTAMEEDKTETGD) shows a compositional bias: basic and acidic residues. The span at 443–453 (KGAKSKSKKYK) shows a compositional bias: basic residues.

This is an uncharacterized protein from Magallana gigas (Pacific oyster).